We begin with the raw amino-acid sequence, 393 residues long: Putative mitogen-activated protein kinase kinase kinase 7-like (393 aa).

The Protein kinase domain occupies 11–266; the sequence is KLSEKFLGAG…PSMKEIEKFL (256 aa). ATP-binding positions include 17–25 and Lys-38; that span reads LGAGSGGAV. Asp-133 functions as the Proton acceptor in the catalytic mechanism. The disordered stretch occupies residues 339–379; sequence AAADGDREVRRAEKDTERETSRAAHNGERETRRAGQDVGRE.

The protein belongs to the protein kinase superfamily. STE Ser/Thr protein kinase family. MAP kinase kinase kinase subfamily. Requires Mg(2+) as cofactor.

It catalyses the reaction L-seryl-[protein] + ATP = O-phospho-L-seryl-[protein] + ADP + H(+). It carries out the reaction L-threonyl-[protein] + ATP = O-phospho-L-threonyl-[protein] + ADP + H(+). The polypeptide is Putative mitogen-activated protein kinase kinase kinase 7-like (Takl1) (Drosophila melanogaster (Fruit fly)).